Reading from the N-terminus, the 508-residue chain is MGLPWYRVHTVVLNDPGRLIAVHIMHTALVSGWAGSMALYELAVFDPSDPILDPMWRQGMFVIPFMTRLGITKSWGGWSITGETITNPGIWSYEGVAAVHIILSGLLFLAAIWHWVYWDLELFRDERTGKPALDLPKIFGIHLFLSGLLCFGFGAFHVTGLFGPGIWISDPYGITGKVQSVSPAWGAEGFDPFNPGGIASHHIAAGILGILAGLFHLSVRPPQRLYKALRMGNVETVLSSSIAAVFFAAFIVSGTMWYGSAATPIELFGPTRYQWDQGYFQQEIDRRVRLSTSQGFSISEAWSRIPEKLAFYDYIGNNPAKGGLFRAGPMDNGDGIAVGWLGHAVFKDKEGHELFVRRMPTFFETFPVVLVDEEGIIRADLPFRRAESKYSIEQVGVTVEFYGGELDNVSFSDPATVKKYARRAQLGEIFEFDRTTLKSDGVFRSSPRGWFTFGHLCFALLFFFGHIWHGARTLFRDVFAGIDPDIDSQIEFGIFQKLGDPTTKKQTV.

Transmembrane regions (helical) follow at residues alanine 21–serine 36, isoleucine 101–tryptophan 115, glycine 140–phenylalanine 156, isoleucine 203–serine 218, valine 237–valine 252, and cysteine 457–arginine 472.

It belongs to the PsbB/PsbC family. PsbB subfamily. As to quaternary structure, PSII is composed of 1 copy each of membrane proteins PsbA, PsbB, PsbC, PsbD, PsbE, PsbF, PsbH, PsbI, PsbJ, PsbK, PsbL, PsbM, PsbT, PsbX, PsbY, PsbZ, Psb30/Ycf12, at least 3 peripheral proteins of the oxygen-evolving complex and a large number of cofactors. It forms dimeric complexes. Binds multiple chlorophylls. PSII binds additional chlorophylls, carotenoids and specific lipids. is required as a cofactor.

It localises to the plastid. The protein resides in the chloroplast thylakoid membrane. In terms of biological role, one of the components of the core complex of photosystem II (PSII). It binds chlorophyll and helps catalyze the primary light-induced photochemical processes of PSII. PSII is a light-driven water:plastoquinone oxidoreductase, using light energy to abstract electrons from H(2)O, generating O(2) and a proton gradient subsequently used for ATP formation. This Chara vulgaris (Common stonewort) protein is Photosystem II CP47 reaction center protein.